Reading from the N-terminus, the 452-residue chain is Membrane-bound lytic murein transglycosylase D (452 aa).

A signal peptide spans 1–15; it reads MKAKAILLASVLLVG. Cys16 carries N-palmitoyl cysteine lipidation. Cys16 carries the S-diacylglycerol cysteine lipid modification. The segment at 113-198 is slt-type domain; the sequence is NMPMELVLLP…LLTVAAYNSG (86 aa). Glu125 is a catalytic residue. 2 LysM domains span residues 341 to 384 and 400 to 448; these read RVYT…SLTI and ITYR…KNNN.

Belongs to the transglycosylase Slt family.

The protein localises to the cell membrane. It catalyses the reaction Exolytic cleavage of the (1-&gt;4)-beta-glycosidic linkage between N-acetylmuramic acid (MurNAc) and N-acetylglucosamine (GlcNAc) residues in peptidoglycan, from either the reducing or the non-reducing ends of the peptidoglycan chains, with concomitant formation of a 1,6-anhydrobond in the MurNAc residue.. Its function is as follows. Murein-degrading enzyme. May play a role in recycling of muropeptides during cell elongation and/or cell division. This Escherichia coli O6:H1 (strain CFT073 / ATCC 700928 / UPEC) protein is Membrane-bound lytic murein transglycosylase D (mltD).